Here is a 157-residue protein sequence, read N- to C-terminus: 17.6 kDa class I heat shock protein 3 (157 aa).

Residues aspartate 43–glycine 157 form the sHSP domain.

Belongs to the small heat shock protein (HSP20) family. In terms of assembly, may form oligomeric structures.

The protein resides in the cytoplasm. The polypeptide is 17.6 kDa class I heat shock protein 3 (HSP17.6C) (Arabidopsis thaliana (Mouse-ear cress)).